Reading from the N-terminus, the 440-residue chain is MVDDENRRRGLLGRRSHARSWLPVKPRRILATAGSFTILVLRALITHDIPRLAASLAYTSLLALVPLIAIALAILAAFPGFGDERERMVAWIIETFVPYRRTEILDQVEHFVGAAAGLTALGVAGLTLTAIILLLTIESSLNAIFRVEKSRHPLARLLVYWSVLTGGPLLMGLSFSLSSYLVAIRHLVGTDVMSPFDALTPTLGPPLLSLTAMTLLYMLVPNRPVPLFHALAGALVATLASALLRSAFLMVITRGLSYETLYGALAALPAFLVWMYLSWAVVLMGAVTAAEIPNWKMARRLTRAGQDERAARLRIAVEIMVAAARAYGEGQGDGASRRALSALTATPDRRQAGVLRDLDKAGLLIRDEDGAVLPGRDPRRITLAEILHALTLAPPTGTVGGPGWPDLLRHALETAGGDYDRALGLSLDALVQAEPLGARI.

7 helical membrane-spanning segments follow: residues I29–I49, L61–F81, G117–I137, L157–L177, P201–P221, P224–L244, and A264–M284.

Belongs to the UPF0761 family.

Its subcellular location is the cell inner membrane. This is UPF0761 membrane protein Rru_A2625 from Rhodospirillum rubrum (strain ATCC 11170 / ATH 1.1.1 / DSM 467 / LMG 4362 / NCIMB 8255 / S1).